The sequence spans 340 residues: GTPase Obg (340 aa).

The 159-residue stretch at 1 to 159 (MGFIDEVKLC…KHVLLKLKVL (159 aa)) folds into the Obg domain. The OBG-type G domain maps to 160 to 329 (SDVGIIGMPN…LSEKLKKSNS (170 aa)). Residues 166 to 173 (GMPNAGKS), 191 to 195 (FTTVR), 212 to 215 (DIPG), 279 to 282 (NKCD), and 310 to 312 (NGD) each bind GTP. Mg(2+) is bound by residues serine 173 and threonine 193.

This sequence belongs to the TRAFAC class OBG-HflX-like GTPase superfamily. OBG GTPase family. Monomer. It depends on Mg(2+) as a cofactor.

Its subcellular location is the cytoplasm. Functionally, an essential GTPase which binds GTP, GDP and possibly (p)ppGpp with moderate affinity, with high nucleotide exchange rates and a fairly low GTP hydrolysis rate. Plays a role in control of the cell cycle, stress response, ribosome biogenesis and in those bacteria that undergo differentiation, in morphogenesis control. The chain is GTPase Obg from Wolbachia sp. subsp. Drosophila simulans (strain wRi).